The chain runs to 282 residues: Bifunctional protein FolD (282 aa).

NADP(+) is bound by residues 164 to 166 (GRS) and Ser189.

The protein belongs to the tetrahydrofolate dehydrogenase/cyclohydrolase family. As to quaternary structure, homodimer.

The enzyme catalyses (6R)-5,10-methylene-5,6,7,8-tetrahydrofolate + NADP(+) = (6R)-5,10-methenyltetrahydrofolate + NADPH. It catalyses the reaction (6R)-5,10-methenyltetrahydrofolate + H2O = (6R)-10-formyltetrahydrofolate + H(+). It participates in one-carbon metabolism; tetrahydrofolate interconversion. Functionally, catalyzes the oxidation of 5,10-methylenetetrahydrofolate to 5,10-methenyltetrahydrofolate and then the hydrolysis of 5,10-methenyltetrahydrofolate to 10-formyltetrahydrofolate. The polypeptide is Bifunctional protein FolD (Streptococcus suis (strain 05ZYH33)).